A 212-amino-acid polypeptide reads, in one-letter code: Pyridoxine/pyridoxamine 5'-phosphate oxidase (212 aa).

Residues 7-10 (RREY) and lysine 65 contribute to the substrate site. FMN-binding positions include 60-65 (RIVLLK), 75-76 (FT), arginine 81, lysine 82, and glutamine 104. Positions 122, 126, and 130 each coordinate substrate. Residues 139-140 (QS) and tryptophan 184 each bind FMN. 190–192 (RLH) is a substrate binding site. Arginine 194 provides a ligand contact to FMN.

It belongs to the pyridoxamine 5'-phosphate oxidase family. In terms of assembly, homodimer. It depends on FMN as a cofactor.

It carries out the reaction pyridoxamine 5'-phosphate + O2 + H2O = pyridoxal 5'-phosphate + H2O2 + NH4(+). It catalyses the reaction pyridoxine 5'-phosphate + O2 = pyridoxal 5'-phosphate + H2O2. Its pathway is cofactor metabolism; pyridoxal 5'-phosphate salvage; pyridoxal 5'-phosphate from pyridoxamine 5'-phosphate: step 1/1. It functions in the pathway cofactor metabolism; pyridoxal 5'-phosphate salvage; pyridoxal 5'-phosphate from pyridoxine 5'-phosphate: step 1/1. Catalyzes the oxidation of either pyridoxine 5'-phosphate (PNP) or pyridoxamine 5'-phosphate (PMP) into pyridoxal 5'-phosphate (PLP). The chain is Pyridoxine/pyridoxamine 5'-phosphate oxidase from Pseudoalteromonas translucida (strain TAC 125).